Reading from the N-terminus, the 248-residue chain is MIEYRIEEAVAKYREFYEFKPVRESAGIEDVRSAIEHTNLKPFATPDDIKKLCLEARENRFHGVCVNPCYVKLAREELEGTDVKVVTVVGFPLGANETRTKAHEAIFAVESGADEIDMVINVGMLKAKEWEYVYEDIRSVVESVKGKVVKVIIETCYLDTEEKIAACVISKLAGAHFVKTSTGFGTGGATAEDVHLMKWIVGDEMGVKASGGIRTFEDAVKMIMYGADRIGTSSGVKIVQGGEERYGG.

Catalysis depends on Asp117, which acts as the Proton donor/acceptor. Lys179 serves as the catalytic Schiff-base intermediate with acetaldehyde. The active-site Proton donor/acceptor is Lys208.

It belongs to the DeoC/FbaB aldolase family. DeoC type 1 subfamily.

The protein localises to the cytoplasm. The enzyme catalyses 2-deoxy-D-ribose 5-phosphate = D-glyceraldehyde 3-phosphate + acetaldehyde. The protein operates within carbohydrate degradation; 2-deoxy-D-ribose 1-phosphate degradation; D-glyceraldehyde 3-phosphate and acetaldehyde from 2-deoxy-alpha-D-ribose 1-phosphate: step 2/2. In terms of biological role, catalyzes a reversible aldol reaction between acetaldehyde and D-glyceraldehyde 3-phosphate to generate 2-deoxy-D-ribose 5-phosphate. The polypeptide is Deoxyribose-phosphate aldolase (Thermotoga sp. (strain RQ2)).